Consider the following 461-residue polypeptide: Peptidyl-prolyl cis-trans isomerase-like 4 (461 aa).

The PPIase cyclophilin-type domain maps to 1 to 171; the sequence is MSVLLETSLG…KDIRIRHTVI (171 aa). Residues 205 to 234 adopt a coiled-coil conformation; that stretch reads EELDDNMDEESMEKLRREREARAQALTLEM. Positions 248-326 constitute an RRM domain; the sequence is NVLFVCKLNP…HRIHVDFSQS (79 aa). Residues 341 to 461 are disordered; that stretch reads KRSGQRGGFG…DERYRERRRR (121 aa). Composition is skewed to basic and acidic residues over residues 365 to 384 and 398 to 461; these read DNAREKENDYTLVFDKGDKA and SNRD…RRRR.

The protein belongs to the cyclophilin-type PPIase family. PPIL4 subfamily.

The protein localises to the nucleus. The enzyme catalyses [protein]-peptidylproline (omega=180) = [protein]-peptidylproline (omega=0). In terms of biological role, PPIases accelerate the folding of proteins. It catalyzes the cis-trans isomerization of proline imidic peptide bonds in oligopeptides. This chain is Peptidyl-prolyl cis-trans isomerase-like 4 (cyp6), found in Aspergillus oryzae (strain ATCC 42149 / RIB 40) (Yellow koji mold).